The primary structure comprises 361 residues: Geranylgeranyl pyrophosphate synthase 3 (361 aa).

The segment at aspartate 44 to proline 63 is disordered. Lysine 81, arginine 84, and histidine 113 together coordinate isopentenyl diphosphate. Mg(2+)-binding residues include aspartate 120 and aspartate 124. Arginine 129 contributes to the dimethylallyl diphosphate binding site. Arginine 130 lines the isopentenyl diphosphate pocket. Residues lysine 207, threonine 208, and glutamine 244 each contribute to the dimethylallyl diphosphate site. Aspartate 247 is a Mg(2+) binding site. Residues asparagine 251, lysine 261, and lysine 271 each contribute to the dimethylallyl diphosphate site.

Belongs to the FPP/GGPP synthase family. It depends on Mg(2+) as a cofactor.

It catalyses the reaction isopentenyl diphosphate + dimethylallyl diphosphate = (2E)-geranyl diphosphate + diphosphate. The catalysed reaction is isopentenyl diphosphate + (2E)-geranyl diphosphate = (2E,6E)-farnesyl diphosphate + diphosphate. It carries out the reaction isopentenyl diphosphate + (2E,6E)-farnesyl diphosphate = (2E,6E,10E)-geranylgeranyl diphosphate + diphosphate. Its function is as follows. Geranylgeranyl pyrophosphate synthase; part of the gene cluster 25 that mediates the biosynthesis of an isoprenoid secondary metabolite. This Zymoseptoria tritici (strain CBS 115943 / IPO323) (Speckled leaf blotch fungus) protein is Geranylgeranyl pyrophosphate synthase 3 (GGS3).